The primary structure comprises 577 residues: Arginine--tRNA ligase (577 aa).

The short motif at 122–132 (PNVAKEMHVGH) is the 'HIGH' region element.

Belongs to the class-I aminoacyl-tRNA synthetase family. In terms of assembly, monomer.

The protein resides in the cytoplasm. It catalyses the reaction tRNA(Arg) + L-arginine + ATP = L-arginyl-tRNA(Arg) + AMP + diphosphate. This chain is Arginine--tRNA ligase, found in Vibrio vulnificus (strain CMCP6).